The chain runs to 362 residues: Phosphoserine aminotransferase (362 aa).

Residues Ser9 and Arg42 each contribute to the L-glutamate site. Pyridoxal 5'-phosphate-binding positions include 76-77, Trp102, Thr153, Asp174, and Gln197; that span reads GR. Position 198 is an N6-(pyridoxal phosphate)lysine (Lys198). 239–240 lines the pyridoxal 5'-phosphate pocket; that stretch reads NT.

Belongs to the class-V pyridoxal-phosphate-dependent aminotransferase family. SerC subfamily. Homodimer. Pyridoxal 5'-phosphate serves as cofactor.

The protein resides in the cytoplasm. The enzyme catalyses O-phospho-L-serine + 2-oxoglutarate = 3-phosphooxypyruvate + L-glutamate. It carries out the reaction 4-(phosphooxy)-L-threonine + 2-oxoglutarate = (R)-3-hydroxy-2-oxo-4-phosphooxybutanoate + L-glutamate. The protein operates within amino-acid biosynthesis; L-serine biosynthesis; L-serine from 3-phospho-D-glycerate: step 2/3. It participates in cofactor biosynthesis; pyridoxine 5'-phosphate biosynthesis; pyridoxine 5'-phosphate from D-erythrose 4-phosphate: step 3/5. Catalyzes the reversible conversion of 3-phosphohydroxypyruvate to phosphoserine and of 3-hydroxy-2-oxo-4-phosphonooxybutanoate to phosphohydroxythreonine. The protein is Phosphoserine aminotransferase of Salmonella arizonae (strain ATCC BAA-731 / CDC346-86 / RSK2980).